Consider the following 697-residue polypeptide: Portal protein (697 aa).

Positions 633–697 are disordered; sequence MSREAAGGVP…RRAGGPYGFH (65 aa). Residues 664 to 689 show a composition bias toward basic and acidic residues; sequence ITADEERRGPERVGRFRNGGPDDPRR.

This sequence belongs to the herpesviridae portal protein family. Homododecamerizes. Interacts with terminase subunits TRM1 and TRM3.

The protein localises to the virion. It localises to the host nucleus. Functionally, forms a portal in the viral capsid through which viral DNA is translocated during DNA packaging. Assembles as a dodecamer at a single fivefold axe of the T=16 icosahedric capsid. Binds to the molecular motor that translocates the viral DNA, termed terminase. The chain is Portal protein (UL104) from Homo sapiens (Human).